A 426-amino-acid chain; its full sequence is Serine--tRNA ligase (426 aa).

231 to 233 contributes to the L-serine binding site; sequence TSE. Residue 262 to 264 coordinates ATP; sequence RSE. E285 is an L-serine binding site. 349–352 lines the ATP pocket; it reads EISS. L-serine is bound at residue S385.

It belongs to the class-II aminoacyl-tRNA synthetase family. Type-1 seryl-tRNA synthetase subfamily. In terms of assembly, homodimer. The tRNA molecule binds across the dimer.

Its subcellular location is the cytoplasm. It carries out the reaction tRNA(Ser) + L-serine + ATP = L-seryl-tRNA(Ser) + AMP + diphosphate + H(+). The catalysed reaction is tRNA(Sec) + L-serine + ATP = L-seryl-tRNA(Sec) + AMP + diphosphate + H(+). It participates in aminoacyl-tRNA biosynthesis; selenocysteinyl-tRNA(Sec) biosynthesis; L-seryl-tRNA(Sec) from L-serine and tRNA(Sec): step 1/1. Catalyzes the attachment of serine to tRNA(Ser). Is also able to aminoacylate tRNA(Sec) with serine, to form the misacylated tRNA L-seryl-tRNA(Sec), which will be further converted into selenocysteinyl-tRNA(Sec). This chain is Serine--tRNA ligase, found in Legionella pneumophila (strain Corby).